The primary structure comprises 677 residues: Methionine--tRNA ligase (677 aa).

The short motif at 15–25 is the 'HIGH' region element; the sequence is PYANGSIHLGH. The Zn(2+) site is built by Cys146, Cys149, Cys159, and Cys162. A 'KMSKS' region motif is present at residues 333–337; the sequence is KMSKS. Lys336 is a binding site for ATP. Positions 575–677 constitute a tRNA-binding domain; that stretch reads DFAKVDLRVA…AGAKPGHQVK (103 aa).

It belongs to the class-I aminoacyl-tRNA synthetase family. MetG type 1 subfamily. In terms of assembly, homodimer. It depends on Zn(2+) as a cofactor.

Its subcellular location is the cytoplasm. The enzyme catalyses tRNA(Met) + L-methionine + ATP = L-methionyl-tRNA(Met) + AMP + diphosphate. Functionally, is required not only for elongation of protein synthesis but also for the initiation of all mRNA translation through initiator tRNA(fMet) aminoacylation. The protein is Methionine--tRNA ligase of Escherichia fergusonii (strain ATCC 35469 / DSM 13698 / CCUG 18766 / IAM 14443 / JCM 21226 / LMG 7866 / NBRC 102419 / NCTC 12128 / CDC 0568-73).